The sequence spans 156 residues: Ribosome maturation factor RimP (156 aa).

It belongs to the RimP family.

Its subcellular location is the cytoplasm. In terms of biological role, required for maturation of 30S ribosomal subunits. This chain is Ribosome maturation factor RimP, found in Anoxybacillus flavithermus (strain DSM 21510 / WK1).